The primary structure comprises 316 residues: Pantothenate kinase (316 aa).

Residue 95–102 participates in ATP binding; sequence GSVAVGKS.

It belongs to the prokaryotic pantothenate kinase family.

The protein localises to the cytoplasm. It carries out the reaction (R)-pantothenate + ATP = (R)-4'-phosphopantothenate + ADP + H(+). It participates in cofactor biosynthesis; coenzyme A biosynthesis; CoA from (R)-pantothenate: step 1/5. The chain is Pantothenate kinase from Shigella sonnei (strain Ss046).